Reading from the N-terminus, the 30-residue chain is Phospholemman-like protein (30 aa).

This sequence belongs to the FXYD family. In terms of processing, phosphorylated by protein kinase a (PK-A) and protein kinase C (PK-C). Phosphorylated in response to insulin and adrenergic stimulation.

It is found in the microsome membrane. The protein localises to the endoplasmic reticulum membrane. Its function is as follows. Induces a hyperpolarization-activated chloride current when expressed in Xenopus oocytes. May have a functional role in muscle contraction. The sequence is that of Phospholemman-like protein from Squalus acanthias (Spiny dogfish).